The following is a 427-amino-acid chain: Flotillin-1 (427 aa).

Phosphoserine occurs at positions 19, 163, and 385.

It belongs to the band 7/mec-2 family. Flotillin subfamily. As to quaternary structure, heterooligomeric complex of flotillin-1 and flotillin-2 and caveolin-1 and caveolin-2. Interacts with ECPAS.

It localises to the cell membrane. Its subcellular location is the endosome. The protein localises to the membrane. It is found in the caveola. The protein resides in the melanosome. It localises to the membrane raft. In terms of biological role, may act as a scaffolding protein within caveolar membranes, functionally participating in formation of caveolae or caveolae-like vesicles. This chain is Flotillin-1 (FLOT1), found in Bos taurus (Bovine).